Reading from the N-terminus, the 127-residue chain is Competence protein ComGF (127 aa).

As to quaternary structure, the transformation pili are flexible filaments, consisting mainly of the major pilin ComGC and smaller amounts of the minor pilins, including at least ComGD, ComGF and ComGG. Interacts with ComGD. Interacts with ComGG.

The protein localises to the cell membrane. It is found in the fimbrium. Required for formation of the type IV-like pilus (T4P) that plays a role in transformation. Involved in transformation. Transformation pili are dynamically extended and retracted, perhaps thereby promoting DNA uptake and transformation. Required for transformation and DNA binding. The polypeptide is Competence protein ComGF (comGF) (Bacillus subtilis (strain 168)).